The sequence spans 496 residues: WD repeat-containing protein 37 (496 aa).

Composition is skewed to polar residues over residues 1–13 (MPTE…TARQ) and 22–31 (SLSIRRTNSS). Residues 1-50 (MPTESGSCSTARQAKQKRKSHSLSIRRTNSSEQERTGLPREMLEGQDSKL) are disordered. A compositionally biased stretch (basic and acidic residues) spans 32 to 47 (EQERTGLPREMLEGQD). WD repeat units lie at residues 154 to 194 (GHRD…CLVK) and 197 to 236 (GHVG…PTPQ). The tract at residues 238-267 (VADTSQQISGEDEIECSDKDEPDIDGDVSS) is disordered. The segment covering 247 to 265 (GEDEIECSDKDEPDIDGDV) has biased composition (acidic residues). WD repeat units follow at residues 281 to 320 (SHQG…LVHS), 323 to 362 (GHDQ…IHSV), 367 to 405 (GHTD…SPIA), 408 to 447 (RTDS…LARL), and 454 to 495 (GHRR…LLQE).

In terms of assembly, forms homodimers. Interacts with PACS1. Interacts with PACS2.

The protein localises to the cytoplasm. Its subcellular location is the nucleus. Required for normal ER Ca2+ handling in lymphocytes. Together with PACS1, it plays an essential role in stabilizing peripheral lymphocyte populations. The chain is WD repeat-containing protein 37 (Wdr37) from Mus musculus (Mouse).